Reading from the N-terminus, the 349-residue chain is Fructose-1,6-bisphosphatase class 1 (349 aa).

Mg(2+) is bound by residues Glu92, Asp113, Leu115, and Asp116. Residues 116-119 (DGSS), Asn209, Tyr242, and Lys272 each bind substrate. Glu278 is a Mg(2+) binding site.

This sequence belongs to the FBPase class 1 family. In terms of assembly, homotetramer. Mg(2+) serves as cofactor.

The protein localises to the cytoplasm. It carries out the reaction beta-D-fructose 1,6-bisphosphate + H2O = beta-D-fructose 6-phosphate + phosphate. It participates in carbohydrate biosynthesis; Calvin cycle. This Chloroherpeton thalassium (strain ATCC 35110 / GB-78) protein is Fructose-1,6-bisphosphatase class 1.